The sequence spans 352 residues: Photosystem II D2 protein (352 aa).

Position 2 is an N-acetylthreonine (Thr2). The residue at position 2 (Thr2) is a Phosphothreonine. A helical transmembrane segment spans residues 40 to 60 (TAYLALGGWLTGTTFVTSWYT). A chlorophyll a-binding site is contributed by His117. A helical membrane pass occupies residues 124 to 140 (GFMLRQFEIARSVKLRP). Pheophytin a contacts are provided by Gln129 and Asn142. A helical transmembrane segment spans residues 152–165 (VFVSVFLIYPLGQS). Residue His197 participates in chlorophyll a binding. The helical transmembrane segment at 207–227 (AALLCAIHGATVENTLFEDGD) threads the bilayer. 2 residues coordinate a plastoquinone: His214 and Phe261. A Fe cation-binding site is contributed by His214. Fe cation is bound at residue His268. A helical transmembrane segment spans residues 278–294 (GLWMSALGVVGLALNLR).

Belongs to the reaction center PufL/M/PsbA/D family. In terms of assembly, PSII is composed of 1 copy each of membrane proteins PsbA, PsbB, PsbC, PsbD, PsbE, PsbF, PsbH, PsbI, PsbJ, PsbK, PsbL, PsbM, PsbT, PsbX, PsbY, PsbZ, Psb30/Ycf12, at least 3 peripheral proteins of the oxygen-evolving complex and a large number of cofactors. It forms dimeric complexes. The cofactor is The D1/D2 heterodimer binds P680, chlorophylls that are the primary electron donor of PSII, and subsequent electron acceptors. It shares a non-heme iron and each subunit binds pheophytin, quinone, additional chlorophylls, carotenoids and lipids. There is also a Cl(-1) ion associated with D1 and D2, which is required for oxygen evolution. The PSII complex binds additional chlorophylls, carotenoids and specific lipids..

The protein resides in the plastid. It is found in the chloroplast thylakoid membrane. It catalyses the reaction 2 a plastoquinone + 4 hnu + 2 H2O = 2 a plastoquinol + O2. Its function is as follows. Photosystem II (PSII) is a light-driven water:plastoquinone oxidoreductase that uses light energy to abstract electrons from H(2)O, generating O(2) and a proton gradient subsequently used for ATP formation. It consists of a core antenna complex that captures photons, and an electron transfer chain that converts photonic excitation into a charge separation. The D1/D2 (PsbA/PsbD) reaction center heterodimer binds P680, the primary electron donor of PSII as well as several subsequent electron acceptors. D2 is needed for assembly of a stable PSII complex. The sequence is that of Photosystem II D2 protein from Pleurastrum terricola (Filamentous green alga).